The primary structure comprises 207 residues: Ras-related protein Rab-2A (207 aa).

GTP is bound at residue 12–20 (GDTGVGKSC). An Effector region motif is present at residues 34-42 (HDLTIGVEF). Residues 60–64 (DTAGQ), 118–121 (NKSD), and 148–150 (SAK) each bind GTP. The tract at residues 187 to 207 (GAPTSKQDGTDQKPAGGGCCK) is disordered. 2 S-geranylgeranyl cysteine lipidation sites follow: cysteine 205 and cysteine 206.

The protein belongs to the small GTPase superfamily. Rab family.

It localises to the cell membrane. The enzyme catalyses GTP + H2O = GDP + phosphate + H(+). Its activity is regulated as follows. Regulated by guanine nucleotide exchange factors (GEFs) which promote the exchange of bound GDP for free GTP, GTPase activating proteins (GAPs) which increase the GTP hydrolysis activity, and GDP dissociation inhibitors which inhibit the dissociation of the nucleotide from the GTPase. The small GTPases Rab are key regulators of intracellular membrane trafficking, from the formation of transport vesicles to their fusion with membranes. Rabs cycle between active GTP-bound and inactive GDP-bound states. In their active state, drive transport of vesicular carriers from donor organelles to acceptor organelles to regulate the membrane traffic that maintains organelle identity and morphology. This chain is Ras-related protein Rab-2A (rab2A), found in Dictyostelium discoideum (Social amoeba).